The following is a 657-amino-acid chain: Threonine--tRNA ligase (657 aa).

Residues 1–70 (MSDHKESTGA…NSDAAIEIIT (70 aa)) form the TGS domain. Residues 253–555 (DHRKLGAELE…LIEHTAGNFP (303 aa)) form a catalytic region. Residues Cys-351, His-402, and His-532 each coordinate Zn(2+).

This sequence belongs to the class-II aminoacyl-tRNA synthetase family. As to quaternary structure, homodimer. The cofactor is Zn(2+).

The protein resides in the cytoplasm. The enzyme catalyses tRNA(Thr) + L-threonine + ATP = L-threonyl-tRNA(Thr) + AMP + diphosphate + H(+). Its function is as follows. Catalyzes the attachment of threonine to tRNA(Thr) in a two-step reaction: L-threonine is first activated by ATP to form Thr-AMP and then transferred to the acceptor end of tRNA(Thr). Also edits incorrectly charged L-seryl-tRNA(Thr). In Chlorobium chlorochromatii (strain CaD3), this protein is Threonine--tRNA ligase.